Here is a 248-residue protein sequence, read N- to C-terminus: Undecaprenyl-diphosphatase (248 aa).

The next 8 helical transmembrane spans lie at 4 to 24 (IVLG…SGHL), 40 to 60 (FAFL…KEIV), 74 to 94 (YSLV…GFLF), 101 to 121 (SFSN…SLFV), 134 to 154 (ISYI…FPGI), 174 to 194 (ALKY…ILET), 201 to 221 (SYIL…LLIL), and 228 to 248 (KKLK…FFVG).

The protein belongs to the UppP family.

It localises to the cell inner membrane. The catalysed reaction is di-trans,octa-cis-undecaprenyl diphosphate + H2O = di-trans,octa-cis-undecaprenyl phosphate + phosphate + H(+). Its function is as follows. Catalyzes the dephosphorylation of undecaprenyl diphosphate (UPP). Confers resistance to bacitracin. The polypeptide is Undecaprenyl-diphosphatase (Thermosipho africanus (strain TCF52B)).